Here is a 413-residue protein sequence, read N- to C-terminus: uncharacterized protein (413 aa).

Positions 3-155 (MEPRVLRREE…SRVRLSVPAG (153 aa)) constitute an N-acetyltransferase domain. Acetyl-CoA-binding positions include 86–88 (VSV), 94–99 (RRGVLT), and 122–123 (SE). Residue Tyr-127 is the Proton donor of the active site. The active-site Proton acceptor; via carboxylate is the Phe-413.

It belongs to the acetyltransferase Eis family. In terms of assembly, homohexamer; trimer of dimers.

This is an uncharacterized protein from Streptomyces coelicolor (strain ATCC BAA-471 / A3(2) / M145).